The chain runs to 445 residues: MKHSLPVKDTIIIGFMLFALFFGAGNMIYPPELGQAAGHNVWKAIGGFLLTGVGLPLLGIIAIALTGKDAKGLADKAHPVFGTIFTVVLYLSIGPLFAIPRTGTVSYEIGAVPFLTGVPERLSLLIFTLIFFGVTYYLALNPSKVVDRVGKILTPIKFTIILIIVLKAIFTPMGGLGAVTEAYKGTPVFKGFLEGYKTMDALASIVFGVVVVNAVKSKGVTQSKALAAACIKAGVIAALGLTFIYVSLAYLGATSTNAIGPVGEGAKILSASSHYLFGSLGNIVLGAAITVACLTTSIGLVTSCGQYFSKLIPALSYKIVVTIVTLFSLIIANFGLAQIIAFSVPILSAIYPLAIVIIVLSFIDKIFKERREVYIACLIGTGLFSILDGIKAAGFSLGSLDVFLNANLPLYSLGIGWVLPGIVGAVIGYVLTLFIGPSKQLNEIS.

Helical transmembrane passes span 11–31, 45–65, 79–99, 122–142, 158–178, 192–212, 233–253, 275–295, 311–331, 339–359, 375–395, and 415–435; these read IIIG…IYPP, IGGF…AIAL, PVFG…LFAI, LSLL…ALNP, FTII…GLGA, FLEG…VVVV, AGVI…YLGA, YLFG…ACLT, LIPA…SLII, IIAF…VIIV, IACL…AAGF, and IGWV…TLFI.

It belongs to the branched chain amino acid transporter family.

Its subcellular location is the cell membrane. Branched-chain amino acid transport system which is involved in the uptake of isoleucine, valine and probably leucine. Together with BcaP and BrnQ, plays an important role in the activation of CodY, a branched-chain amino acid-responsive transcriptional regulator that controls the expression of several dozen transcription units in B.subtilis. This Bacillus subtilis (strain 168) protein is Branched-chain amino acid permease BraB.